Reading from the N-terminus, the 419-residue chain is Ribosomal RNA large subunit methyltransferase G (419 aa).

The span at 386 to 408 (KAEPFETHPTEAEAKVEVTESKP) shows a compositional bias: basic and acidic residues. The interval 386 to 419 (KAEPFETHPTEAEAKVEVTESKPHPQSSLYGTKK) is disordered. The segment covering 409-419 (HPQSSLYGTKK) has biased composition (polar residues).

It belongs to the methyltransferase superfamily. RlmG family.

Its subcellular location is the cytoplasm. It carries out the reaction guanosine(1835) in 23S rRNA + S-adenosyl-L-methionine = N(2)-methylguanosine(1835) in 23S rRNA + S-adenosyl-L-homocysteine + H(+). Its function is as follows. Specifically methylates the guanine in position 1835 (m2G1835) of 23S rRNA. The polypeptide is Ribosomal RNA large subunit methyltransferase G (Shewanella woodyi (strain ATCC 51908 / MS32)).